Here is a 275-residue protein sequence, read N- to C-terminus: 4-diphosphocytidyl-2-C-methyl-D-erythritol kinase (275 aa).

Residue Lys14 is part of the active site. 98–108 (PMGAGLGGGSS) is a binding site for ATP. The active site involves Asp140.

It belongs to the GHMP kinase family. IspE subfamily.

It carries out the reaction 4-CDP-2-C-methyl-D-erythritol + ATP = 4-CDP-2-C-methyl-D-erythritol 2-phosphate + ADP + H(+). The protein operates within isoprenoid biosynthesis; isopentenyl diphosphate biosynthesis via DXP pathway; isopentenyl diphosphate from 1-deoxy-D-xylulose 5-phosphate: step 3/6. Its function is as follows. Catalyzes the phosphorylation of the position 2 hydroxy group of 4-diphosphocytidyl-2C-methyl-D-erythritol. The chain is 4-diphosphocytidyl-2-C-methyl-D-erythritol kinase from Francisella philomiragia subsp. philomiragia (strain ATCC 25017 / CCUG 19701 / FSC 153 / O#319-036).